A 514-amino-acid chain; its full sequence is MQQLNPSEISDIIKKRIEKLDISSEAKNEGTILSVSDGIVLIHGLADVMYGEMIEFANGTYGMALNLERDSVGAVVLGDYEGLAEGQKVRCTGRILEVPVGNELLGRVVDSLGNPIDGKGELGNSLTSPVEKVAPGVIARQSVDEPVQTGLKAIDTMVPIGRGQRELIIGDRQIGKTAVAIDAIINQKHTGIKCIYVAVGQKQSSIAAVVRKLEEHGAMDHTIVVAAGAADPAAMQFLAPYAGTSMGEFFRDRGEDALIVYDDLSKQAVAYRQISLLLRRPPGREAFPGDVFYLHSRLLERASRVNADYVEQFTNGEVKGKTGSLTALPIIETQAGDVSAFVPTNVISITDGQIFLETNLFNSGIRPAMNAGISVSRVGGAAQTKIMKKLGGNIRLALAQYRELAAFAQFASDLDEATRKQLEHGQRVTELMKQNQYSPMTVAEMGTVLFAANEGFLDDVDVNKVVKFEAQLLDWMRSEQKELLDKIGPEGNFNDDITAGLKAALEKFKTTQSW.

An ATP-binding site is contributed by Gly170–Thr177.

The protein belongs to the ATPase alpha/beta chains family. In terms of assembly, F-type ATPases have 2 components, CF(1) - the catalytic core - and CF(0) - the membrane proton channel. CF(1) has five subunits: alpha(3), beta(3), gamma(1), delta(1), epsilon(1). CF(0) has three main subunits: a(1), b(2) and c(9-12). The alpha and beta chains form an alternating ring which encloses part of the gamma chain. CF(1) is attached to CF(0) by a central stalk formed by the gamma and epsilon chains, while a peripheral stalk is formed by the delta and b chains.

The protein localises to the cell inner membrane. The enzyme catalyses ATP + H2O + 4 H(+)(in) = ADP + phosphate + 5 H(+)(out). Its function is as follows. Produces ATP from ADP in the presence of a proton gradient across the membrane. The alpha chain is a regulatory subunit. This chain is ATP synthase subunit alpha, found in Marinobacter nauticus (strain ATCC 700491 / DSM 11845 / VT8) (Marinobacter aquaeolei).